Consider the following 765-residue polypeptide: Alpha,alpha-trehalose phosphorylase (765 aa).

352 to 353 (WD) contributes to the substrate binding site. The Proton donor role is filled by E479. 591-592 (KQ) lines the substrate pocket.

This sequence belongs to the glycosyl hydrolase 65 family. Homodimer.

The enzyme catalyses alpha,alpha-trehalose + phosphate = beta-D-glucose 1-phosphate + D-glucose. It functions in the pathway glycan degradation; trehalose degradation. Its function is as follows. Catalyzes the reversible phosphorolytic cleavage of trehalose. Phosphorolysis is specific for trehalose. The chain is Alpha,alpha-trehalose phosphorylase (treP) from Geobacillus stearothermophilus (Bacillus stearothermophilus).